An 85-amino-acid chain; its full sequence is Arminin 2b (85 aa).

The first 18 residues, M1–A18, serve as a signal peptide directing secretion. Residues R19–A57 constitute a propeptide that is removed on maturation. A82 is subject to Alanine amide.

This sequence belongs to the arminin family. As to expression, expressed in entodermal epithelium along the body column.

It is found in the secreted. It localises to the target cell membrane. Its function is as follows. Antimicrobial peptide with a broad-spectrum antimicrobial activity. Keeps its antibacterial activity under a wide range of salt concentrations that mimic physiological conditions of human blood, which is surprising, since Hydra is an obligate freshwater animal with nearly no salt tolerance. Does not affect red blood cells. The protein is Arminin 2b of Hydra vulgaris (Hydra).